The chain runs to 256 residues: Hydroxyacylglutathione hydrolase (256 aa).

Positions 57, 59, 61, 62, 115, 134, and 172 each coordinate Zn(2+).

It belongs to the metallo-beta-lactamase superfamily. Glyoxalase II family. In terms of assembly, monomer. Zn(2+) is required as a cofactor.

It catalyses the reaction an S-(2-hydroxyacyl)glutathione + H2O = a 2-hydroxy carboxylate + glutathione + H(+). It functions in the pathway secondary metabolite metabolism; methylglyoxal degradation; (R)-lactate from methylglyoxal: step 2/2. Thiolesterase that catalyzes the hydrolysis of S-D-lactoyl-glutathione to form glutathione and D-lactic acid. The sequence is that of Hydroxyacylglutathione hydrolase from Rhizobium johnstonii (strain DSM 114642 / LMG 32736 / 3841) (Rhizobium leguminosarum bv. viciae).